A 112-amino-acid polypeptide reads, in one-letter code: Protein NIM1-INTERACTING 3 (112 aa).

2 disordered regions span residues 1 to 20 (MDRD…EEKM) and 77 to 112 (EKAA…NLSL). Coiled coils occupy residues 1–35 (MDRD…EMRK) and 69–96 (NKAE…SKEK). The span at 77–89 (EKAANESSSASNE) shows a compositional bias: low complexity.

Belongs to the NPR1-interactor family. Interacts with NPR1 C-terminal region.

It localises to the nucleus. This Arabidopsis thaliana (Mouse-ear cress) protein is Protein NIM1-INTERACTING 3.